A 54-amino-acid polypeptide reads, in one-letter code: Soricidin (54 aa).

Cystine bridges form between C2–C23, C6–C27, and C9–C41.

Belongs to the opioid neuropeptide precursor family. Member of a multiprotein complex. As to expression, salivary gland.

Its subcellular location is the secreted. Functionally, paralytic toxin that immobilizes a mealworm for 7 days. Inhibits the transient receptor potential cation channel subfamily V member 6 (TRPV6). In Blarina brevicauda (Northern short-tailed shrew), this protein is Soricidin.